Here is a 402-residue protein sequence, read N- to C-terminus: MAQDRKKVLVLGAGYAGLQTVTKLQKELSADAAEITLINKNEYHYESTWLHEASAGTINYEDLLYPVEKTVNKNKVNFVVAEVTKIDRNAKRVETDKGVYDFDILVVALGFVSETFGIDGMKEHAFQIENVLTSRKLSRHIEDKFANYAASKEKDDKDLSILVGGAGFTGIEFLGELTDRIPELCSKYGVDQSKVKLTCVEAAPKMLPMFSDDLVSYAVKYLEDRGVEFKIATPIVACNEKGFVVEVNGEKQQLEAGTSVWTAGVRGSHLMEESFEGVKRGRIINKQDLTIEGHNDIFVIGDCSAFIPADEERPLPTTAQIAMQQGEHTASNIKRLLNGESTQDFQYVNRGTVCSLGANDGVGIVYGRDIAGKKAAFLKKVIDTRAIYKLGGIGLAFKKGKF.

FAD contacts are provided by residues 12–16, 39–40, and Val83; these read GAGYA and NK. Residue Glu172 is part of the active site. Residues Asp302, 319–320, and Lys379 each bind FAD; that span reads AQ.

The protein belongs to the NADH dehydrogenase family. The cofactor is FAD.

It is found in the cell membrane. The catalysed reaction is a quinone + NADH + H(+) = a quinol + NAD(+). In terms of biological role, alternative, nonproton pumping NADH:quinone oxidoreductase that delivers electrons to the respiratory chain by oxidation of NADH and reduction of quinones, and contributes to the regeneration of NAD(+). In Staphylococcus epidermidis (strain ATCC 12228 / FDA PCI 1200), this protein is Type II NADH:quinone oxidoreductase.